A 287-amino-acid polypeptide reads, in one-letter code: Damage-control phosphatase PH1575 (287 aa).

The Subfamily I CxxC motif motif lies at C7 to C10. 3 residues coordinate Mn(2+): D156, N157, and D191. A Subfamily I GNFE motif motif is present at residues G243 to E246. Positions K263 to C264 match the Subfamily I KC motif motif.

The protein belongs to the damage-control phosphatase family. Nucleotides phosphatase I subfamily. The cofactor is Mn(2+). It depends on Ni(2+) as a cofactor. [2Fe-2S] cluster is required as a cofactor.

Its activity is regulated as follows. Activity is strongly promoted by Co(2+), Ni(2+), Mg(2+), Mn(2+), Ca(2+), Zn(2+) and Cu(2+). Activity is inhibited by EDTA. Its function is as follows. Metal-dependent phosphatase with probable damage-control functions. Shows phosphatase activity against p-nitrophenyl phosphate (pNPP), but natural substrates have not been identified yet. Low phosphatase activity against 8-oxo nucleotides suggests that it could hydrolyze oxidatively damaged purine nucleotides or their biosynthetic intermediates. The polypeptide is Damage-control phosphatase PH1575 (Pyrococcus horikoshii (strain ATCC 700860 / DSM 12428 / JCM 9974 / NBRC 100139 / OT-3)).